A 124-amino-acid chain; its full sequence is MAPREPGFAGALPIDGYGPGFFRIAGAVHRGGLLIHAEAAMPWTGFDDLAALRALAGQVDLLLCGMGADIAHLPKGLQVELEALGVMAEPMSTASAARHYNVLLSEGRRVGAALLPMPGAVPTA.

Not required for the biogenesis of c-type cytochromes. This is an uncharacterized protein from Rhodobacter capsulatus (strain ATCC BAA-309 / NBRC 16581 / SB1003).